The chain runs to 275 residues: Membrane protein insertase YidC (275 aa).

The N-terminal stretch at 1–22 is a signal peptide; the sequence is MKKYKRLLLMAGLVTLVFVLSA. C23 carries N-palmitoyl cysteine lipidation. C23 carries the S-diacylglycerol cysteine lipid modification. 4 helical membrane passes run 53–73, 127–147, 169–189, and 206–226; these read LGGS…IILL, YIGC…YQAI, YLIL…LSSM, and PAMI…YWVV. Over residues 249-266 the composition is skewed to basic and acidic residues; the sequence is EEAARQAKARERALERAK. Residues 249–275 form a disordered region; it reads EEAARQAKARERALERAKSPKKKGKKK.

It belongs to the OXA1/ALB3/YidC family. Type 2 subfamily.

It localises to the cell membrane. Required for the insertion and/or proper folding and/or complex formation of integral membrane proteins into the membrane. Involved in integration of membrane proteins that insert both dependently and independently of the Sec translocase complex, as well as at least some lipoproteins. This Enterococcus faecalis (strain ATCC 700802 / V583) protein is Membrane protein insertase YidC.